The primary structure comprises 22 residues: Caerin-3.5 (22 aa).

The residue at position 22 (Lys22) is a Lysine amide.

In terms of tissue distribution, expressed by the skin dorsal glands.

It localises to the secreted. Its function is as follows. Shows significant activity against Gram-positive organisms, but is less effective against Gram-negative organisms. The chain is Caerin-3.5 from Ranoidea gracilenta (Dainty green tree frog).